A 160-amino-acid chain; its full sequence is Cyclic pyranopterin monophosphate synthase (160 aa).

Residues 75–77 (LCH) and 113–114 (ME) each bind substrate. Residue D128 is part of the active site.

Belongs to the MoaC family. As to quaternary structure, homohexamer; trimer of dimers.

It carries out the reaction (8S)-3',8-cyclo-7,8-dihydroguanosine 5'-triphosphate = cyclic pyranopterin phosphate + diphosphate. The protein operates within cofactor biosynthesis; molybdopterin biosynthesis. Functionally, catalyzes the conversion of (8S)-3',8-cyclo-7,8-dihydroguanosine 5'-triphosphate to cyclic pyranopterin monophosphate (cPMP). The sequence is that of Cyclic pyranopterin monophosphate synthase from Sodalis glossinidius (strain morsitans).